The chain runs to 234 residues: UPF0173 metal-dependent hydrolase RHECIAT_CH0001941 (234 aa).

Belongs to the UPF0173 family.

This Rhizobium etli (strain CIAT 652) protein is UPF0173 metal-dependent hydrolase RHECIAT_CH0001941.